The chain runs to 362 residues: E3 ubiquitin-protein ligase TM129 (362 aa).

At 1–6 (MESPEV) the chain is on the lumenal side. The helical transmembrane segment at 7 to 27 (TFTLAYVVFSVCFVFTPNEFH) threads the bilayer. Over 28–56 (SAGITVQNLLSGWLGSEDVAFVHYHIRRS) the chain is Cytoplasmic. A helical membrane pass occupies residues 57 to 77 (TATLLTHSLLPMGYFIGMCFA). Over 78-94 (APEKELYNVYKAADGWK) the chain is Lumenal. Residues 95-115 (VFVLITVLLPVTTSILAFYWS) form a helical membrane-spanning segment. The Cytoplasmic segment spans residues 116–362 (QKRWGNHPLA…FCIVDVCIVR (247 aa)). The RING-type; degenerate zinc finger occupies 285–350 (CIGCMQTNAN…SSHVPCPTCR (66 aa)).

The protein belongs to the TMEM129 family. As to quaternary structure, integral component of ER-resident dislocation complexes.

The protein localises to the endoplasmic reticulum membrane. The catalysed reaction is S-ubiquitinyl-[E2 ubiquitin-conjugating enzyme]-L-cysteine + [acceptor protein]-L-lysine = [E2 ubiquitin-conjugating enzyme]-L-cysteine + N(6)-ubiquitinyl-[acceptor protein]-L-lysine.. It participates in protein modification; protein ubiquitination. In terms of biological role, E3 ubiquitin-protein ligase involved in ER-associated protein degradation, preferentially associates with the E2 enzyme UBE2J2. This is E3 ubiquitin-protein ligase TM129 (tmem129) from Xenopus tropicalis (Western clawed frog).